Consider the following 308-residue polypeptide: Pseudouridine-5'-phosphate glycosidase (308 aa).

E29 functions as the Proton donor in the catalytic mechanism. 2 residues coordinate substrate: K90 and V110. D142 contributes to the Mn(2+) binding site. 144–146 (SSD) serves as a coordination point for substrate. K163 functions as the Nucleophile in the catalytic mechanism.

The protein belongs to the pseudouridine-5'-phosphate glycosidase family. Homotrimer. It depends on Mn(2+) as a cofactor.

The catalysed reaction is D-ribose 5-phosphate + uracil = psi-UMP + H2O. Catalyzes the reversible cleavage of pseudouridine 5'-phosphate (PsiMP) to ribose 5-phosphate and uracil. Functions biologically in the cleavage direction, as part of a pseudouridine degradation pathway. In Serratia proteamaculans (strain 568), this protein is Pseudouridine-5'-phosphate glycosidase.